A 241-amino-acid chain; its full sequence is Carboxy-S-adenosyl-L-methionine synthase (241 aa).

S-adenosyl-L-methionine contacts are provided by residues tyrosine 38, 63–65, 88–89, 116–117, asparagine 131, and arginine 198; these read GCS, DN, and DI.

The protein belongs to the class I-like SAM-binding methyltransferase superfamily. Cx-SAM synthase family. In terms of assembly, homodimer.

It catalyses the reaction prephenate + S-adenosyl-L-methionine = carboxy-S-adenosyl-L-methionine + 3-phenylpyruvate + H2O. In terms of biological role, catalyzes the conversion of S-adenosyl-L-methionine (SAM) to carboxy-S-adenosyl-L-methionine (Cx-SAM). This Mannheimia succiniciproducens (strain KCTC 0769BP / MBEL55E) protein is Carboxy-S-adenosyl-L-methionine synthase.